Consider the following 906-residue polypeptide: Protein translocase subunit SecA (906 aa).

Residues glutamine 89, 107 to 111 (GEGKT), and aspartate 502 contribute to the ATP site. The interval 868-887 (VPPAQRDPADPRTWGKVSRN) is disordered. Residues cysteine 890, cysteine 892, cysteine 901, and histidine 902 each contribute to the Zn(2+) site.

It belongs to the SecA family. As to quaternary structure, monomer and homodimer. Part of the essential Sec protein translocation apparatus which comprises SecA, SecYEG and auxiliary proteins SecDF-YajC and YidC. The cofactor is Zn(2+).

Its subcellular location is the cell inner membrane. The protein localises to the cytoplasm. The enzyme catalyses ATP + H2O + cellular proteinSide 1 = ADP + phosphate + cellular proteinSide 2.. Functionally, part of the Sec protein translocase complex. Interacts with the SecYEG preprotein conducting channel. Has a central role in coupling the hydrolysis of ATP to the transfer of proteins into and across the cell membrane, serving both as a receptor for the preprotein-SecB complex and as an ATP-driven molecular motor driving the stepwise translocation of polypeptide chains across the membrane. The sequence is that of Protein translocase subunit SecA from Brucella abortus (strain S19).